The primary structure comprises 642 residues: MWRAIWLRISEKGLRRPPPPSLRTVTTSCTTMGADGVHTVNTTERLAKLRELMKQHSVQAFVVPSEDQHSSEYLANCDKRRAFISGFDGSAGCAIITTDKAYLFTDGRYFLQAEKQLDKNWKLMKQGLPDVPTWQDFLYKNLGPHTQIGIDATLLAASDAESLTKQLTPKYSKLVSLKENLVDVVWGEDRPSRPQNSVFHLDVKYSGQSHLDKIATLREEMKKKKAEAIVVTMLDEVAWLLNLRGSDIEYNPVFFAYAVVTMDEVILFIDSAQLDDTARHNLEHVYTMPYEAIFEHLNSLSRTLELDRDSKVLIGDRASLAVADAIGKDNYTIVRSPIADLKAIKNKTELEGFRQSHIRDGAALVRYFAWLEEQLNHGTVINESQGADKLEAFRSELDLFRGLSFDTISGTGPNGAIIHYKPDPNDCAIIKKDQVYLCDSGGQFLDGTTDVTRTWHFGTPTDEEKRAFTRVLQGHIAIDTAVFPNGTTGYVIDAFARRALWQDGLDYRHGTGHGVGHFLNVHEGPHGIGVRIALNNTPLKAGMTVSNEPGYYADGKFGIRIESIVLVREVKTPNNFGDKGYLGFENVTMCPIHKNLVDVSLLNEQEKKWLDEYHAETWDKVSPLLKGDTRALEWLRRECSPL.

Residues Asp439, Asp450, Glu548, and Glu562 each coordinate Mn(2+).

It belongs to the peptidase M24B family. Mn(2+) is required as a cofactor.

The enzyme catalyses Release of any N-terminal amino acid, including proline, that is linked to proline, even from a dipeptide or tripeptide.. In terms of biological role, catalyzes the removal of a penultimate prolyl residue from the N-termini of peptides. The chain is Probable Xaa-Pro aminopeptidase P (AMPP) from Laccaria bicolor (strain S238N-H82 / ATCC MYA-4686) (Bicoloured deceiver).